The sequence spans 503 residues: Probable cytosol aminopeptidase (503 aa).

2 residues coordinate Mn(2+): Lys270 and Asp275. Lys282 is a catalytic residue. Mn(2+)-binding residues include Asp293, Asp352, and Glu354. The active site involves Arg356.

This sequence belongs to the peptidase M17 family. The cofactor is Mn(2+).

It localises to the cytoplasm. It carries out the reaction Release of an N-terminal amino acid, Xaa-|-Yaa-, in which Xaa is preferably Leu, but may be other amino acids including Pro although not Arg or Lys, and Yaa may be Pro. Amino acid amides and methyl esters are also readily hydrolyzed, but rates on arylamides are exceedingly low.. It catalyses the reaction Release of an N-terminal amino acid, preferentially leucine, but not glutamic or aspartic acids.. In terms of biological role, presumably involved in the processing and regular turnover of intracellular proteins. Catalyzes the removal of unsubstituted N-terminal amino acids from various peptides. In Edwardsiella ictaluri (strain 93-146), this protein is Probable cytosol aminopeptidase.